The following is a 416-amino-acid chain: Lipid phosphate phosphatase delta (416 aa).

Helical transmembrane passes span 72-92 (FFSGLSCVVSVPFYTAFLPLL) and 104-124 (MTLLIAFCDYLGNCIKDVVSA). The tract at residues 119 to 127 (KDVVSAPRP) is phosphatase sequence motif I. The interval 151–154 (PSSH) is phosphatase sequence motif II. His-154 acts as the Proton donor in catalysis. Residues 178-198 (VSIQYYGFALACLLVALIAFG) form a helical membrane-spanning segment. The segment at 198–209 (GRVYLGMHSVVD) is phosphatase sequence motif III. His-205 (nucleophile) is an active-site residue. Helical transmembrane passes span 207–227 (VVDIVSGLAIGVLILGLWLTV), 241–261 (VSSFWTALSFLLLFAYPTPEH), 266–286 (YEYHTAFNGVTLGIVTGVQQT), 302–322 (ELPISSYLGRVMVGIPTILLV), and 393–413 (FFQYAGLAWSVVDLVPSLFSY).

This sequence belongs to the type 2 lipid phosphate phosphatase family.

Its subcellular location is the endoplasmic reticulum membrane. Functionally, functions as a sphingoid long-chain base phosphate (LCBP) phosphatase. May play a role in the regulation of LCBP levels and be involved in stomatal responses through LCBP-mediated ABA signaling. The polypeptide is Lipid phosphate phosphatase delta (LPPD) (Arabidopsis thaliana (Mouse-ear cress)).